Consider the following 202-residue polypeptide: Holliday junction branch migration complex subunit RuvA (202 aa).

The domain I stretch occupies residues 1 to 64 (MIGRLRGSLA…EDAHLLYGFY (64 aa)). Residues 65–143 (EKRERELFRE…AWESLPGTFT (79 aa)) form a domain II region. The tract at residues 144-153 (LVSNGPNQAE) is flexible linker. The domain III stretch occupies residues 154–202 (PVASAESDAVSALISLGYKPQEASKAVSAIKEKDLSSADLIRRALKGMG).

This sequence belongs to the RuvA family. Homotetramer. Forms an RuvA(8)-RuvB(12)-Holliday junction (HJ) complex. HJ DNA is sandwiched between 2 RuvA tetramers; dsDNA enters through RuvA and exits via RuvB. An RuvB hexamer assembles on each DNA strand where it exits the tetramer. Each RuvB hexamer is contacted by two RuvA subunits (via domain III) on 2 adjacent RuvB subunits; this complex drives branch migration. In the full resolvosome a probable DNA-RuvA(4)-RuvB(12)-RuvC(2) complex forms which resolves the HJ.

It is found in the cytoplasm. In terms of biological role, the RuvA-RuvB-RuvC complex processes Holliday junction (HJ) DNA during genetic recombination and DNA repair, while the RuvA-RuvB complex plays an important role in the rescue of blocked DNA replication forks via replication fork reversal (RFR). RuvA specifically binds to HJ cruciform DNA, conferring on it an open structure. The RuvB hexamer acts as an ATP-dependent pump, pulling dsDNA into and through the RuvAB complex. HJ branch migration allows RuvC to scan DNA until it finds its consensus sequence, where it cleaves and resolves the cruciform DNA. The chain is Holliday junction branch migration complex subunit RuvA from Pseudomonas savastanoi pv. phaseolicola (strain 1448A / Race 6) (Pseudomonas syringae pv. phaseolicola (strain 1448A / Race 6)).